The sequence spans 128 residues: Sulfurtransferase TusD (128 aa).

Cys-78 acts as the Cysteine persulfide intermediate in catalysis.

The protein belongs to the DsrE/TusD family. Heterohexamer, formed by a dimer of trimers. The hexameric TusBCD complex contains 2 copies each of TusB, TusC and TusD. The TusBCD complex interacts with TusE.

It localises to the cytoplasm. Part of a sulfur-relay system required for 2-thiolation of 5-methylaminomethyl-2-thiouridine (mnm(5)s(2)U) at tRNA wobble positions. Accepts sulfur from TusA and transfers it in turn to TusE. The polypeptide is Sulfurtransferase TusD (Klebsiella pneumoniae (strain 342)).